We begin with the raw amino-acid sequence, 248 residues long: Ferric nitrobindin-like protein (248 aa).

Composition is skewed to polar residues over residues 1–25 and 32–43; these read MSSD…TNSG and QAVNLAAEQSKS. Residues 1-49 are disordered; that stretch reads MSSDKANNQSPDQGANTPAESTNSGPKLDGNQAVNLAAEQSKSTADKNL. The GXWXGXG signature appears at 82–88; sequence GVWRGQG. The interval 118 to 147 is disordered; the sequence is SRTWKINPPAEEGAEADGDEASAESAGEPE. Residues 129–139 show a composition bias toward acidic residues; sequence EGAEADGDEAS.

The protein belongs to the nitrobindin family.

In Corynebacterium urealyticum (strain ATCC 43042 / DSM 7109), this protein is Ferric nitrobindin-like protein.